A 309-amino-acid chain; its full sequence is tRNA pseudouridine synthase B (309 aa).

Aspartate 52 acts as the Nucleophile in catalysis.

This sequence belongs to the pseudouridine synthase TruB family. Type 1 subfamily.

It carries out the reaction uridine(55) in tRNA = pseudouridine(55) in tRNA. Responsible for synthesis of pseudouridine from uracil-55 in the psi GC loop of transfer RNAs. The sequence is that of tRNA pseudouridine synthase B from Leptospira interrogans serogroup Icterohaemorrhagiae serovar copenhageni (strain Fiocruz L1-130).